Here is a 268-residue protein sequence, read N- to C-terminus: Aliphatic sulfonates import ATP-binding protein SsuB 2 (268 aa).

The 215-residue stretch at V16 to I230 folds into the ABC transporter domain. G48 to T55 serves as a coordination point for ATP.

This sequence belongs to the ABC transporter superfamily. Aliphatic sulfonates importer (TC 3.A.1.17.2) family. The complex is composed of two ATP-binding proteins (SsuB), two transmembrane proteins (SsuC) and a solute-binding protein (SsuA).

Its subcellular location is the cell inner membrane. The enzyme catalyses ATP + H2O + aliphatic sulfonate-[sulfonate-binding protein]Side 1 = ADP + phosphate + aliphatic sulfonateSide 2 + [sulfonate-binding protein]Side 1.. Its function is as follows. Part of the ABC transporter complex SsuABC involved in aliphatic sulfonates import. Responsible for energy coupling to the transport system. In Pseudomonas savastanoi pv. phaseolicola (strain 1448A / Race 6) (Pseudomonas syringae pv. phaseolicola (strain 1448A / Race 6)), this protein is Aliphatic sulfonates import ATP-binding protein SsuB 2.